The chain runs to 363 residues: Ankyrin repeat domain-containing protein 40 (363 aa).

Position 1 is an N-acetylmethionine (Met1). ANK repeat units follow at residues 9–38 (EQQE…DVNS) and 43–72 (NGWT…DREI). The disordered stretch occupies residues 135–167 (DSTQLQNGGPSPPPVSPPADSSPPLLPPTETPL). Residues 144–164 (PSPPPVSPPADSSPPLLPPTE) show a composition bias toward pro residues. Ser176 is subject to Phosphoserine.

The sequence is that of Ankyrin repeat domain-containing protein 40 (Ankrd40) from Mus musculus (Mouse).